Reading from the N-terminus, the 316-residue chain is Protein FLUORESCENT IN BLUE LIGHT, chloroplastic (316 aa).

Residues 1–26 (MAALIRCCSSFSHTSGGQPPPRDKSR) constitute a chloroplast transit peptide. Residues 125 to 145 (MFSMPILLLVALIGATVGGLL) traverse the membrane as a helical segment. Residues 144–175 (LLARQRKGELQRLNEQLRQINAALRRQAKIES) are a coiled coil. TPR repeat units follow at residues 203–236 (LISKLKTGKTFLRNQEPEKAYTEFKIALELAQSL), 243–276 (KKAARGLGASLQRQGKYREAIQYHSMVLAISKRE), and 283–316 (TEAYGAIADCYTELGDLEKAGKFYDTYIARLETD).

As to quaternary structure, part of the FLU-containing chloroplast membrane complex composed of FLU, CRD1, PORB, PORC, CHLP and HEMA1. Interacts with HEMA1 (via C-terminus) only in the absence of light. No interaction with HEMA2.

The protein resides in the plastid. The protein localises to the chloroplast membrane. It is found in the chloroplast thylakoid membrane. Its function is as follows. Negative regulator of tetrapyrrole biosynthesis (including chlorophyll) in chloroplasts, probably via HEMA1 repression. Inhibits especially the magnesium ion Mg(2+) branch of tetrapyrrole biosynthesis, but independently of heme. In Arabidopsis thaliana (Mouse-ear cress), this protein is Protein FLUORESCENT IN BLUE LIGHT, chloroplastic (FLU).